The following is a 526-amino-acid chain: Outer capsid protein VP5 (526 aa).

An involved in membrane permeabilization region spans residues 1–42 (MGKVIRSLNRFGKKVGNALTSNTAKKIYSTIGKAADEFLESE).

It belongs to the orbivirus VP5 family.

Its subcellular location is the virion. Functionally, VP5 protein is one of the two proteins (with VP2) which constitute the virus particle outer capsid. Acts as a membrane permeabilization protein that mediates release of viral particles from endosomal compartments into the cytoplasm. Permeabilization activity is probably negatively regulated by VP2 and is triggered by endosomal degradation of VP2 and exposure to low pH. The sequence is that of Outer capsid protein VP5 (Segment-6) from Bluetongue virus 1 (isolate South Africa) (BTV 1).